A 199-amino-acid polypeptide reads, in one-letter code: Streptomycin biosynthesis protein StrG (199 aa).

Its pathway is antibiotic biosynthesis; streptomycin biosynthesis. In terms of biological role, may be involved in the formation of N-methyl-L-glucosamine. The protein is Streptomycin biosynthesis protein StrG (strG) of Streptomyces griseus.